Here is a 181-residue protein sequence, read N- to C-terminus: RNA pyrophosphohydrolase (181 aa).

Positions 6–149 (GFRPNVGIIL…KRRVYTRALQ (144 aa)) constitute a Nudix hydrolase domain. The short motif at 38–59 (GGIKAQETPEEALFRELEEEVG) is the Nudix box element. Positions 159-181 (GLPRQPPVGRPRRSAPPRGCRRA) are disordered. The segment covering 168 to 181 (RPRRSAPPRGCRRA) has biased composition (basic residues).

Belongs to the Nudix hydrolase family. RppH subfamily. Requires a divalent metal cation as cofactor.

Functionally, accelerates the degradation of transcripts by removing pyrophosphate from the 5'-end of triphosphorylated RNA, leading to a more labile monophosphorylated state that can stimulate subsequent ribonuclease cleavage. The protein is RNA pyrophosphohydrolase of Alkalilimnicola ehrlichii (strain ATCC BAA-1101 / DSM 17681 / MLHE-1).